The sequence spans 135 residues: Transcriptional activator protein (135 aa).

The short motif at K17–R32 is the Nuclear localization signal element. A zinc finger lies at C37–H54. Residues A82–Q102 are disordered. The transactivation stretch occupies residues A120 to F135.

It belongs to the geminiviridae transcriptional activator protein family. In terms of assembly, monomer. Homodimer. Homooligomer. Self-interaction correlates with nuclear localization and efficient activation of transcription. Monomers suppress local silencing by interacting with and inactivating host adenosine kinase 2 (ADK2) in the cytoplasm. Interacts with and inhibits host SNF1 kinase. Binds to ssDNA. Phosphorylated.

The protein resides in the host nucleus. The protein localises to the host cytoplasm. In terms of biological role, strong activator of the late viral genes promoters. Enhances the expression of the capsid protein and nuclear shuttle protein. Acts as a suppressor of RNA-mediated gene silencing, also known as post-transcriptional gene silencing (PTGS), a mechanism of plant viral defense that limits the accumulation of viral RNAs. Suppresses the host RNA silencing by inhibiting adenosine kinase 2 (ADK2), a kinase involved in a general methylation pathway. Also suppresses the host basal defense by interacting with and inhibiting SNF1 kinase, a key regulator of cell metabolism implicated in innate antiviral defense. Determines pathogenicity. This is Transcriptional activator protein from Mungbean yellow mosaic virus (strain Vigna) (MYMV).